Reading from the N-terminus, the 169-residue chain is Anaerobic nitrite reductase NSHB2 (169 aa).

Residues 16-166 (SFSEEQEALV…LVAAIKQEMK (151 aa)) enclose the Globin domain. The Homodimerization signature appears at 49-53 (EVAPS). Heme b contacts are provided by serine 59, lysine 73, histidine 77, arginine 107, threonine 111, and histidine 112. The short motif at 119–131 (DAHFEVTRFALLE) is the Homodimerization element.

This sequence belongs to the plant globin family. As to quaternary structure, homodimer. It depends on heme b as a cofactor. As to expression, expressed in leaves, but not in roots. Present in embryonic organs including embryos, coleoptiles and seminal roots.

Its subcellular location is the cytoplasm. It localises to the nucleus. It carries out the reaction Fe(III)-heme b-[protein] + nitric oxide + H2O = Fe(II)-heme b-[protein] + nitrite + 2 H(+). Phytoglobin that reduces nitrite to nitric oxide under anoxic conditions (e.g. during flooding or in waterlogged soil). May not function as an oxygen storage or transport protein. Has an unusually high affinity for O(2) through an hexacoordinate heme iron because of a very low dissociation constant. Promotes tolerance to low potassium K(+) conditions. This is Anaerobic nitrite reductase NSHB2 from Oryza sativa subsp. japonica (Rice).